A 371-amino-acid polypeptide reads, in one-letter code: Aurora kinase (371 aa).

Polar residues-rich tracts occupy residues Met-1–Leu-15 and Arg-48–Asp-80. Positions Met-1–Pro-84 are disordered. One can recognise a Protein kinase domain in the interval Phe-99–Ile-350. Residues Leu-105–Val-113 and Lys-128 each bind ATP. Asp-222 acts as the Proton acceptor in catalysis.

It belongs to the protein kinase superfamily. Ser/Thr protein kinase family. Aurora subfamily.

It is found in the nucleus. It localises to the cytoplasm. Its subcellular location is the cytoskeleton. The protein resides in the spindle. The protein localises to the chromosome. It is found in the centromere. It localises to the kinetochore. It carries out the reaction L-seryl-[protein] + ATP = O-phospho-L-seryl-[protein] + ADP + H(+). It catalyses the reaction L-threonyl-[protein] + ATP = O-phospho-L-threonyl-[protein] + ADP + H(+). Its function is as follows. Component of the chromosomal passenger complex (CPC), a complex that acts as a key regulator of chromosome segregation and cytokinesis. Has a role in error-correction of aberrent kinetochore-microtubule attachments to ensure that sister kinetochores become bioriented and connect to opposite poles by promoting spindle assembly checkpoint signaling. The chain is Aurora kinase (IPL1) from Yarrowia lipolytica (strain CLIB 122 / E 150) (Yeast).